We begin with the raw amino-acid sequence, 70 residues long: Deleted in esophageal cancer 1 (70 aa).

Expressed in many tissues, with highest expression in prostate and testis. Reduced expression in esophageal carcinomas.

Its function is as follows. Candidate tumor suppressor. The sequence is that of Deleted in esophageal cancer 1 from Homo sapiens (Human).